The following is a 381-amino-acid chain: Opsin Rh2 (381 aa).

Topologically, residues 1-56 (MERSHLPETPFDLAHSGPRFQAQSSGNGSVLDNVLPDMAHLVNPYWSRFAPMDPMM) are extracellular. A glycan (N-linked (GlcNAc...) asparagine) is linked at asparagine 27. A helical membrane pass occupies residues 57–81 (SKILGLFTLAIMIISCCGNGVVVYI). At 82 to 93 (FGGTKSLRTPAN) the chain is on the cytoplasmic side. A helical transmembrane segment spans residues 94-119 (LLVLNLAFSDFCMMASQSPVMIINFY). Over 120–133 (YETWVLGPLWCDIY) the chain is Extracellular. A disulfide bridge links cysteine 130 with cysteine 207. Residues 134–153 (AGCGSLFGCVSIWSMCMIAF) form a helical membrane-spanning segment. Over 154–172 (DRYNVIVKGINGTPMTIKT) the chain is Cytoplasmic. The helical transmembrane segment at 173–196 (SIMKILFIWMMAVFWTVMPLIGWS) threads the bilayer. Over 197–220 (AYVPEGNLTACSIDYMTRMWNPRS) the chain is Extracellular. A helical membrane pass occupies residues 221 to 248 (YLITYSLFVYYTPLFLICYSYWFIIAAV). The Cytoplasmic segment spans residues 249 to 283 (AAHEKAMREQAKKMNVKSLRSSEDCDKSAEGKLAK). Residues 284–307 (VALTTISLWFMAWTPYLVICYFGL) traverse the membrane as a helical segment. Residues 308-314 (FKIDGLT) lie on the Extracellular side of the membrane. Residues 315 to 339 (PLTTIWGATFAKTSAVYNPIVYGIS) traverse the membrane as a helical segment. Lysine 326 carries the post-translational modification N6-(retinylidene)lysine. Over 340–381 (HPKYRIVLKEKCPMCVFGNTDEPKPDAPASDTETTSEADSKA) the chain is Cytoplasmic. The interval 359 to 381 (TDEPKPDAPASDTETTSEADSKA) is disordered. A compositionally biased stretch (polar residues) spans 370–381 (DTETTSEADSKA).

The protein belongs to the G-protein coupled receptor 1 family. Opsin subfamily. Post-translationally, phosphorylated on some or all of the serine and threonine residues present in the C-terminal region. As to expression, predominant opsin expressed in the dorsal ocelli.

Its subcellular location is the membrane. Visual pigments are the light-absorbing molecules that mediate vision. They consist of an apoprotein, opsin, covalently linked to cis-retinal. The polypeptide is Opsin Rh2 (Rh2) (Drosophila melanogaster (Fruit fly)).